Here is a 446-residue protein sequence, read N- to C-terminus: UDP-N-acetylmuramoylalanine--D-glutamate ligase (446 aa).

Glycine 116–threonine 122 serves as a coordination point for ATP.

The protein belongs to the MurCDEF family.

The protein resides in the cytoplasm. It catalyses the reaction UDP-N-acetyl-alpha-D-muramoyl-L-alanine + D-glutamate + ATP = UDP-N-acetyl-alpha-D-muramoyl-L-alanyl-D-glutamate + ADP + phosphate + H(+). Its pathway is cell wall biogenesis; peptidoglycan biosynthesis. Its function is as follows. Cell wall formation. Catalyzes the addition of glutamate to the nucleotide precursor UDP-N-acetylmuramoyl-L-alanine (UMA). This Marinobacter nauticus (strain ATCC 700491 / DSM 11845 / VT8) (Marinobacter aquaeolei) protein is UDP-N-acetylmuramoylalanine--D-glutamate ligase.